Reading from the N-terminus, the 660-residue chain is MSKRIALFPALLLALLVIVATALTWMNFSQALPRSQWAQAAWSPDIDVIEQMIFHYSLLPRLAISLLVGAGLGLVGVLFQQVLRNPLAEPTTLGVATGAQLGITVTTLWAIPGAMASQFAAQAGACVVGLIVFGVAWGKRLSPVTLILAGLVVSLYCGAINQLLVIFHHDQLQSMFLWSTGTLTQTDWGGVERLWPQLLGGVMLTLLLLRPLTLMGLDDGVARNLGLALSLARLAALSLAIVISALLVNAVGIIGFIGLFAPLLAKMLGARRLLPRLMLASLIGALILWLSDQIILWLTRVWMEVSTGSVTALIGAPLLLWLLPRLRSISAPDMKVNDRVAAERQHVLAFALAGGVLLLMAVVVALSFGRDAHGWTWASGALLEDLMPWRWPRIMAALFAGVMLAVAGCIIQRLTGNPMASPEVLGISSGAAFGVVLMLFLVPGNAFGWLLPAGSLGAAVTLLIIMIAAGRGGFSPHRMLLAGMALSTAFTMLLMMLQASGDPRMAQVLTWISGSTYNATDAQVWRTGIVMVILLAITPLCRRWLTILPLGGDTARAVGMALTPTRIALLLLAACLTATATMTIGPLSFVGLMAPHIARMMGFRRTMPHIVISALVGGLLLVFADWCGRMVLFPFQIPAGLLSTFIGAPYFIYLLRKQSR.

Helical transmembrane passes span I5–W25, L62–V82, L93–G113, Q118–G138, I147–F167, Q197–L217, A240–F260, L277–W297, M303–L323, L348–F368, W391–I411, V424–G444, F447–I467, M479–A499, G528–L548, I567–L587, M607–C627, and F635–L655.

Belongs to the binding-protein-dependent transport system permease family. FecCD subfamily. The complex is composed of two ATP-binding proteins (FhuC), a transmembrane protein (FhuB) and a solute-binding protein (FhuD). FhuB interacts with FhuC. FhuB interacts with FhuD. FhuB binds substrate-loaded FhuD more strongly than FhuD alone.

It localises to the cell inner membrane. Its function is as follows. Part of the ABC transporter complex FhuCDB involved in iron(3+)-hydroxamate import. Responsible for the translocation of the substrate across the membrane. This is Iron(3+)-hydroxamate import system permease protein FhuB (fhuB) from Escherichia coli (strain K12).